Here is a 189-residue protein sequence, read N- to C-terminus: Small ribosomal subunit protein uS7 (189 aa).

The protein belongs to the universal ribosomal protein uS7 family. In terms of assembly, part of the 30S ribosomal subunit.

Functionally, one of the primary rRNA binding proteins, it binds directly to 16S rRNA where it nucleates assembly of the head domain of the 30S subunit. Is located at the subunit interface close to the decoding center. The protein is Small ribosomal subunit protein uS7 of Methanosarcina mazei (strain ATCC BAA-159 / DSM 3647 / Goe1 / Go1 / JCM 11833 / OCM 88) (Methanosarcina frisia).